The primary structure comprises 205 residues: MSRYRGPRLRIVRRIGKLPSLTNKTSKKRKSPGQPATSFKRKKKISKYNIRLKEKQKLRFNYGITERQLLNYVKKSRKKKGSSGRFLLTFLEMRLDNIVHRIGFAPTIMAAKQLINHGHICVDDKVINIPSFICQPKSIIKPKKSTVSENVIQKNIESKELLLIPPHLSLNKKNLEAKIIGLINRKAISLIVNELLVIEFYSRKV.

Positions 16–40 (GKLPSLTNKTSKKRKSPGQPATSFK) are disordered. The S4 RNA-binding domain occupies 93–161 (MRLDNIVHRI…IQKNIESKEL (69 aa)).

The protein belongs to the universal ribosomal protein uS4 family. As to quaternary structure, part of the 30S ribosomal subunit. Contacts protein S5. The interaction surface between S4 and S5 is involved in control of translational fidelity.

The protein localises to the plastid. Its subcellular location is the chloroplast. In terms of biological role, one of the primary rRNA binding proteins, it binds directly to 16S rRNA where it nucleates assembly of the body of the 30S subunit. Functionally, with S5 and S12 plays an important role in translational accuracy. The polypeptide is Small ribosomal subunit protein uS4c (rps4) (Euglena gracilis).